The following is a 411-amino-acid chain: Lissencephaly-1 homolog (411 aa).

In terms of domain architecture, LisH spans 9-41; the sequence is QREELNQAIADYLGSNGYADSLETFRKEADLST. Positions 56 to 83 form a coiled coil; that stretch reads TSVIRLQKKVMDLEAKLTEAEKEVIEGA. WD repeat units follow at residues 106–147, 148–187, 191–230, 233–272, 275–334, 337–376, and 379–411; these read GHRA…RSLK, GHTD…ECVK, GHDH…CVKT, GHRE…CKVE, DHEH…CLLT, GHDN…CMKT, and AHQH…WECR.

Belongs to the WD repeat LIS1/nudF family.

The protein localises to the cytoplasm. The protein resides in the cytoskeleton. Its subcellular location is the microtubule organizing center. It is found in the centrosome. In terms of biological role, positively regulates the activity of the minus-end directed microtubule motor protein dynein. May enhance dynein-mediated microtubule sliding by targeting dynein to the microtubule plus end. Required for several dynein- and microtubule-dependent processes. In Drosophila mojavensis (Fruit fly), this protein is Lissencephaly-1 homolog.